The following is a 680-amino-acid chain: DNA-directed RNA polymerase subunit beta' (680 aa).

4 residues coordinate Zn(2+): Cys-69, Cys-71, Cys-87, and Cys-90. 3 residues coordinate Mg(2+): Asp-489, Asp-491, and Asp-493.

This sequence belongs to the RNA polymerase beta' chain family. RpoC1 subfamily. In plastids the minimal PEP RNA polymerase catalytic core is composed of four subunits: alpha, beta, beta', and beta''. When a (nuclear-encoded) sigma factor is associated with the core the holoenzyme is formed, which can initiate transcription. Mg(2+) serves as cofactor. It depends on Zn(2+) as a cofactor.

The protein resides in the plastid. The protein localises to the chloroplast. The catalysed reaction is RNA(n) + a ribonucleoside 5'-triphosphate = RNA(n+1) + diphosphate. Its function is as follows. DNA-dependent RNA polymerase catalyzes the transcription of DNA into RNA using the four ribonucleoside triphosphates as substrates. This Capsella bursa-pastoris (Shepherd's purse) protein is DNA-directed RNA polymerase subunit beta'.